Consider the following 2837-residue polypeptide: Probable polyketide synthase 3 (2837 aa).

In terms of domain architecture, Ketosynthase family 3 (KS3) spans 39–464 (NNGIGIIGIG…GSNVCIILKD (426 aa)). Active-site for beta-ketoacyl synthase activity residues include Cys-209, His-348, and His-388. The tract at residues 664-697 (GIKPTFIVGHSLGEVTAAYCSGMIDLETECYLIY) is acyl/malonyl transferase. Residue Ser-674 is the For acyl/malonyl transferase activity of the active site. Residues 962-1084 (IDILGNSITD…GNFQLFKHNG (123 aa)) form an N-terminal hotdog fold region. The region spanning 962-1255 (IDILGNSITD…CTSLTPIQDS (294 aa)) is the PKS/mFAS DH domain. The Proton acceptor; for dehydratase activity role is filled by His-995. A C-terminal hotdog fold region spans residues 1106–1255 (NLTKLTKEDL…CTSLTPIQDS (150 aa)). Asp-1169 acts as the Proton donor; for dehydratase activity in catalysis. The 78-residue stretch at 2330–2407 (DNKNSVNQMF…SSIKIITNSL (78 aa)) folds into the Carrier domain. Ser-2367 carries the O-(pantetheine 4'-phosphoryl)serine modification. A helical transmembrane segment spans residues 2464–2484 (KVILLSGSTGFLGGYLLLNLV).

Pantetheine 4'-phosphate serves as cofactor.

It is found in the membrane. In terms of biological role, probable polyketide synthase. The polypeptide is Probable polyketide synthase 3 (pks3) (Dictyostelium discoideum (Social amoeba)).